We begin with the raw amino-acid sequence, 446 residues long: Probable glycine dehydrogenase (decarboxylating) subunit 1 (446 aa).

Belongs to the GcvP family. N-terminal subunit subfamily. In terms of assembly, the glycine cleavage system is composed of four proteins: P, T, L and H. In this organism, the P 'protein' is a heterodimer of two subunits.

It catalyses the reaction N(6)-[(R)-lipoyl]-L-lysyl-[glycine-cleavage complex H protein] + glycine + H(+) = N(6)-[(R)-S(8)-aminomethyldihydrolipoyl]-L-lysyl-[glycine-cleavage complex H protein] + CO2. Its function is as follows. The glycine cleavage system catalyzes the degradation of glycine. The P protein binds the alpha-amino group of glycine through its pyridoxal phosphate cofactor; CO(2) is released and the remaining methylamine moiety is then transferred to the lipoamide cofactor of the H protein. This is Probable glycine dehydrogenase (decarboxylating) subunit 1 from Thermococcus onnurineus (strain NA1).